Here is a 463-residue protein sequence, read N- to C-terminus: Probable Xaa-Pro aminopeptidase PEPP (463 aa).

Residues Asp259, Asp270, Glu393, and Glu433 each coordinate Mn(2+).

It belongs to the peptidase M24B family. The cofactor is Mn(2+).

It catalyses the reaction Release of any N-terminal amino acid, including proline, that is linked to proline, even from a dipeptide or tripeptide.. Catalyzes the removal of a penultimate prolyl residue from the N-termini of peptides. This chain is Probable Xaa-Pro aminopeptidase PEPP (PEPP), found in Phaeosphaeria nodorum (strain SN15 / ATCC MYA-4574 / FGSC 10173) (Glume blotch fungus).